The sequence spans 380 residues: Beta sliding clamp (380 aa).

It belongs to the beta sliding clamp family. As to quaternary structure, forms a ring-shaped head-to-tail homodimer around DNA which binds and tethers DNA polymerases and other proteins to the DNA. The DNA replisome complex has a single clamp-loading complex (3 tau and 1 each of delta, delta', psi and chi subunits) which binds 3 Pol III cores (1 core on the leading strand and 2 on the lagging strand) each with a beta sliding clamp dimer. Additional proteins in the replisome are other copies of gamma, psi and chi, Ssb, DNA helicase and RNA primase.

The protein localises to the cytoplasm. Its function is as follows. Confers DNA tethering and processivity to DNA polymerases and other proteins. Acts as a clamp, forming a ring around DNA (a reaction catalyzed by the clamp-loading complex) which diffuses in an ATP-independent manner freely and bidirectionally along dsDNA. Initially characterized for its ability to contact the catalytic subunit of DNA polymerase III (Pol III), a complex, multichain enzyme responsible for most of the replicative synthesis in bacteria; Pol III exhibits 3'-5' exonuclease proofreading activity. The beta chain is required for initiation of replication as well as for processivity of DNA replication. This Mycoplasma pneumoniae (strain ATCC 29342 / M129 / Subtype 1) (Mycoplasmoides pneumoniae) protein is Beta sliding clamp (dnaN).